Here is a 103-residue protein sequence, read N- to C-terminus: UPF0145 protein BC_1816 (103 aa).

Belongs to the UPF0145 family.

This is UPF0145 protein BC_1816 from Bacillus cereus (strain ATCC 14579 / DSM 31 / CCUG 7414 / JCM 2152 / NBRC 15305 / NCIMB 9373 / NCTC 2599 / NRRL B-3711).